The primary structure comprises 527 residues: Transcription initiation factor TFIID subunit 6b (527 aa).

The Histone-fold domain occupies 3-99 (TKESIEVIAQ…NLEPTSGSKS (97 aa)). 2 disordered regions span residues 410–442 (SPPT…THQP) and 462–492 (MRGT…PKTS). Polar residues-rich tracts occupy residues 416-427 (VWKTNGKLTSPR) and 462-473 (MRGTTTVPQQSH).

The protein belongs to the TAF6 family. As to quaternary structure, component of the TFIID complex. TFIID is composed of TATA binding protein (TBP) and a number of TBP-associated factors (TAFs) whose MWs range from 14-217 kDa. Interacts with TAF5 and TAF9. As to expression, expressed in roots, leaves, inflorescences and siliques.

The protein resides in the nucleus. In terms of biological role, TAFs are components of the transcription factor IID (TFIID) complex that is essential for mediating regulation of RNA polymerase transcription. Not redundant with TAF6. This chain is Transcription initiation factor TFIID subunit 6b (TAF6B), found in Arabidopsis thaliana (Mouse-ear cress).